The following is a 133-amino-acid chain: Ribosome-binding factor A (133 aa).

This sequence belongs to the RbfA family. Monomer. Binds 30S ribosomal subunits, but not 50S ribosomal subunits or 70S ribosomes.

The protein resides in the cytoplasm. Functionally, one of several proteins that assist in the late maturation steps of the functional core of the 30S ribosomal subunit. Associates with free 30S ribosomal subunits (but not with 30S subunits that are part of 70S ribosomes or polysomes). Required for efficient processing of 16S rRNA. May interact with the 5'-terminal helix region of 16S rRNA. This Yersinia enterocolitica protein is Ribosome-binding factor A.